The following is a 291-amino-acid chain: 5'-3' exonuclease (291 aa).

A 5'-3' exonuclease domain is found at 176-269; the sequence is APYQVVEYKG…DLTGLKPIQK (94 aa).

Functionally, 5'-3' exonuclease acting preferentially on double-stranded DNA. The polypeptide is 5'-3' exonuclease (polA) (Mycoplasma genitalium (strain ATCC 33530 / DSM 19775 / NCTC 10195 / G37) (Mycoplasmoides genitalium)).